A 102-amino-acid chain; its full sequence is Large ribosomal subunit protein uL24 (102 aa).

Belongs to the universal ribosomal protein uL24 family. As to quaternary structure, part of the 50S ribosomal subunit.

Functionally, one of two assembly initiator proteins, it binds directly to the 5'-end of the 23S rRNA, where it nucleates assembly of the 50S subunit. Its function is as follows. One of the proteins that surrounds the polypeptide exit tunnel on the outside of the subunit. The sequence is that of Large ribosomal subunit protein uL24 from Alcanivorax borkumensis (strain ATCC 700651 / DSM 11573 / NCIMB 13689 / SK2).